The chain runs to 217 residues: Proteasome subunit beta type-6-A like protein (217 aa).

A propeptide spans 1–16 (MERHLMDSQIKGVSTG) (removed in mature form). Catalysis depends on T17, which acts as the Nucleophile.

This sequence belongs to the peptidase T1B family. The 26S proteasome consists of a 20S proteasome core and two 19S regulatory subunits. The 20S proteasome core is composed of 28 subunits that are arranged in four stacked rings, resulting in a barrel-shaped structure. The two end rings are each formed by seven alpha subunits, and the two central rings are each formed by seven beta subunits. The catalytic chamber with the active sites is on the inside of the barrel.

Its subcellular location is the cytoplasm. It is found in the nucleus. The catalysed reaction is Cleavage of peptide bonds with very broad specificity.. In terms of biological role, the proteasome is a multicatalytic proteinase complex which is characterized by its ability to cleave peptides with Arg, Phe, Tyr, Leu, and Glu adjacent to the leaving group at neutral or slightly basic pH. The proteasome has an ATP-dependent proteolytic activity. This subunit is involved in antigen processing to generate class I binding peptides. This chain is Proteasome subunit beta type-6-A like protein (psmb6l-a), found in Salmo salar (Atlantic salmon).